A 145-amino-acid polypeptide reads, in one-letter code: Flagellar assembly factor FliW (145 aa).

The protein belongs to the FliW family. As to quaternary structure, interacts with translational regulator CsrA and flagellin(s).

It localises to the cytoplasm. Functionally, acts as an anti-CsrA protein, binds CsrA and prevents it from repressing translation of its target genes, one of which is flagellin. Binds to flagellin and participates in the assembly of the flagellum. The chain is Flagellar assembly factor FliW from Clostridium kluyveri (strain NBRC 12016).